The following is a 347-amino-acid chain: Aromatic amino acid aminotransferase (347 aa).

Lys214 bears the N6-(pyridoxal phosphate)lysine mark.

Belongs to the class-II pyridoxal-phosphate-dependent aminotransferase family. Homodimer. The cofactor is pyridoxal 5'-phosphate.

It carries out the reaction an aromatic L-alpha-amino acid + 2-oxoglutarate = an aromatic oxo-acid + L-glutamate. Aminotransferase that catalyzes the conversion of aromatic amino acids and 2-oxoglutarate into corresponding aromatic oxo acids and L-glutamate. The chain is Aromatic amino acid aminotransferase from Mycobacteroides abscessus (strain ATCC 19977 / DSM 44196 / CCUG 20993 / CIP 104536 / JCM 13569 / NCTC 13031 / TMC 1543 / L948) (Mycobacterium abscessus).